A 591-amino-acid chain; its full sequence is L-fucose isomerase (591 aa).

Active-site proton acceptor residues include glutamate 337 and aspartate 361. 3 residues coordinate Mn(2+): glutamate 337, aspartate 361, and histidine 528.

Belongs to the L-fucose isomerase family. In terms of assembly, homohexamer. The cofactor is Mn(2+).

It is found in the cytoplasm. The enzyme catalyses L-fucose = L-fuculose. Its pathway is carbohydrate degradation; L-fucose degradation; L-lactaldehyde and glycerone phosphate from L-fucose: step 1/3. In terms of biological role, converts the aldose L-fucose into the corresponding ketose L-fuculose. This Salmonella heidelberg (strain SL476) protein is L-fucose isomerase.